The sequence spans 1033 residues: Error-prone DNA polymerase (1033 aa).

This sequence belongs to the DNA polymerase type-C family. DnaE2 subfamily.

Its subcellular location is the cytoplasm. The catalysed reaction is DNA(n) + a 2'-deoxyribonucleoside 5'-triphosphate = DNA(n+1) + diphosphate. DNA polymerase involved in damage-induced mutagenesis and translesion synthesis (TLS). It is not the major replicative DNA polymerase. This is Error-prone DNA polymerase from Teredinibacter turnerae (strain ATCC 39867 / T7901).